Consider the following 441-residue polypeptide: D-inositol 3-phosphate glycosyltransferase (441 aa).

Residue H38 coordinates 1D-myo-inositol 3-phosphate. Residues 44 to 45 and G52 contribute to the UDP-N-acetyl-alpha-D-glucosamine site; that span reads QP. 1D-myo-inositol 3-phosphate contacts are provided by residues 49–54, K107, Y140, T164, and R184; that span reads DAGGMN. The UDP-N-acetyl-alpha-D-glucosamine site is built by R258, K263, and Q316. The Mg(2+) site is built by F325, Q326, and A328. Residues E338 and E346 each contribute to the UDP-N-acetyl-alpha-D-glucosamine site. Residue T352 coordinates Mg(2+).

Belongs to the glycosyltransferase group 1 family. MshA subfamily. Homodimer.

The catalysed reaction is 1D-myo-inositol 3-phosphate + UDP-N-acetyl-alpha-D-glucosamine = 1D-myo-inositol 2-acetamido-2-deoxy-alpha-D-glucopyranoside 3-phosphate + UDP + H(+). Its function is as follows. Catalyzes the transfer of a N-acetyl-glucosamine moiety to 1D-myo-inositol 3-phosphate to produce 1D-myo-inositol 2-acetamido-2-deoxy-glucopyranoside 3-phosphate in the mycothiol biosynthesis pathway. This chain is D-inositol 3-phosphate glycosyltransferase, found in Mycolicibacterium paratuberculosis (strain ATCC BAA-968 / K-10) (Mycobacterium paratuberculosis).